The following is a 225-amino-acid chain: Glycerol-3-phosphate acyltransferase (225 aa).

The next 6 helical transmembrane spans lie at 1–21 (MAIWLLCNGVLLIVAYFLGSF), 56–76 (GPGLATLGVDICKGAGAVALV), 95–115 (IGLWLSLVVIMAGLMAILGHS), 134–154 (VLLVMSWTVGLAALGIFALVV), 159–178 (IVSLSSISAAISLPVLMFVA), and 182–201 (LAYVLFSITAGVYVVWRHWA).

Belongs to the PlsY family. Probably interacts with PlsX.

Its subcellular location is the cell inner membrane. It carries out the reaction an acyl phosphate + sn-glycerol 3-phosphate = a 1-acyl-sn-glycero-3-phosphate + phosphate. Its pathway is lipid metabolism; phospholipid metabolism. Functionally, catalyzes the transfer of an acyl group from acyl-phosphate (acyl-PO(4)) to glycerol-3-phosphate (G3P) to form lysophosphatidic acid (LPA). This enzyme utilizes acyl-phosphate as fatty acyl donor, but not acyl-CoA or acyl-ACP. The chain is Glycerol-3-phosphate acyltransferase from Acaryochloris marina (strain MBIC 11017).